The following is a 70-amino-acid chain: Conotoxin Ep11.12 (70 aa).

Residues 1–26 form the signal peptide; it reads MMFRVTSVGCFLLVILSLNLVVLTNA. 4 cysteine pairs are disulfide-bonded: cysteine 27-cysteine 41, cysteine 34-cysteine 46, cysteine 40-cysteine 50, and cysteine 45-cysteine 54. Proline 57 is subject to Proline amide. A propeptide spanning residues 61–70 is cleaved from the precursor; it reads AKLREFFRQR.

The protein belongs to the conotoxin I2 superfamily. As to expression, expressed by the venom duct.

The protein resides in the secreted. The polypeptide is Conotoxin Ep11.12 (Conus episcopatus (Bishop's cone)).